A 511-amino-acid chain; its full sequence is MGDWSFLGRLLENAQEHSTVIGKVWLTVLFIFRILVLGAAAEEVWGDEQSDFTCNTQQPGCENVCYDKAFPISHIRFWVLQIIFVSTPTLIYLGHVLHIVRMEEKRKEKEEELKKRGSVKDNNYPGAATSGGGSGGGNNFKDPPIKMGKEKLPIRDERGRIRMGGALLRTYIFNIIFKTLFEVGFIVGQYFLYGFELKPVYQCSRPPCPHTVDCFISRPTEKTIFIIFMLVVASVSLLLNMLEIYHLGWKKLKQGMTSQYSLEMPVTTLTPVMVTGESKPVSLPPPAPPVVVTTTAPAPVLPDTRAVTPLLAPVTMAPYYAAAAPRTRPPSNTASMASYPVAPPVPENRHRAVTPTPVSTPVTIPTPIPTPTPAIINYFNSKSNALAAEQNWVNMAAEQQGKAPSSSAGSSTPSSVRHPLPEQEEPLEQLLPLPAGPPITTTNSGSSTSLSGASGSKWDVEGEEELAEERPISATCTTVEMHEPPLLVDTRRLSRASKSSSSRARSDDLAV.

An intramembrane segment occupies 2-15 (GDWSFLGRLLENAQ). The Cytoplasmic segment spans residues 16–19 (EHST). The helical transmembrane segment at 20-40 (VIGKVWLTVLFIFRILVLGAA) threads the bilayer. Topologically, residues 41–71 (AEEVWGDEQSDFTCNTQQPGCENVCYDKAFP) are extracellular. Intrachain disulfides connect cysteine 54–cysteine 214, cysteine 61–cysteine 208, and cysteine 65–cysteine 203. Residues 72–92 (ISHIRFWVLQIIFVSTPTLIY) traverse the membrane as a helical segment. Residues 93–174 (LGHVLHIVRM…GALLRTYIFN (82 aa)) lie on the Cytoplasmic side of the membrane. Basic and acidic residues predominate over residues 110–119 (EEELKKRGSV). The interval 110-143 (EEELKKRGSVKDNNYPGAATSGGGSGGGNNFKDP) is disordered. Residues 129–138 (TSGGGSGGGN) are compositionally biased toward gly residues. The helical transmembrane segment at 175–195 (IIFKTLFEVGFIVGQYFLYGF) threads the bilayer. The Extracellular segment spans residues 196-223 (ELKPVYQCSRPPCPHTVDCFISRPTEKT). Residues 224–244 (IFIIFMLVVASVSLLLNMLEI) form a helical membrane-spanning segment. Residues 245-511 (YHLGWKKLKQ…SRARSDDLAV (267 aa)) are Cytoplasmic-facing. The disordered stretch occupies residues 397-511 (AEQQGKAPSS…SRARSDDLAV (115 aa)). 2 stretches are compositionally biased toward low complexity: residues 403 to 415 (APSSSAGSSTPSS) and 440 to 456 (TTTNSGSSTSLSGASGS).

It belongs to the connexin family. As to quaternary structure, a hemichannel or connexon is composed of a hexamer of connexins. A functional gap junction is formed by the apposition of two hemichannels. During early stages of lens development, interacts with the C-terminus of MIP. In terms of tissue distribution, detected in eye lens.

The protein resides in the cell membrane. The protein localises to the cell junction. Its subcellular location is the gap junction. Its function is as follows. Structural component of lens fiber gap junctions. Gap junctions are dodecameric channels that connect the cytoplasm of adjoining cells. They are formed by the docking of two hexameric hemichannels, one from each cell membrane. Small molecules and ions diffuse from one cell to a neighboring cell via the central pore. This chain is Gap junction alpha-3 protein (GJA3), found in Gallus gallus (Chicken).